A 103-amino-acid polypeptide reads, in one-letter code: Co-chaperonin GroES (103 aa).

It belongs to the GroES chaperonin family. In terms of assembly, heptamer of 7 subunits arranged in a ring. Interacts with the chaperonin GroEL.

The protein localises to the cytoplasm. Together with the chaperonin GroEL, plays an essential role in assisting protein folding. The GroEL-GroES system forms a nano-cage that allows encapsulation of the non-native substrate proteins and provides a physical environment optimized to promote and accelerate protein folding. GroES binds to the apical surface of the GroEL ring, thereby capping the opening of the GroEL channel. This is Co-chaperonin GroES from Microcystis aeruginosa (strain NIES-843 / IAM M-2473).